The sequence spans 318 residues: Ribose-phosphate pyrophosphokinase 2 (318 aa).

4 residues coordinate Mg(2+): D132, H134, H143, and D147.

The protein belongs to the ribose-phosphate pyrophosphokinase family.

Its subcellular location is the cytoplasm. The enzyme catalyses D-ribose 5-phosphate + ATP = 5-phospho-alpha-D-ribose 1-diphosphate + AMP + H(+). Its pathway is metabolic intermediate biosynthesis; 5-phospho-alpha-D-ribose 1-diphosphate biosynthesis; 5-phospho-alpha-D-ribose 1-diphosphate from D-ribose 5-phosphate (route I): step 1/1. 5-phosphoribose 1-diphosphate synthase involved in nucleotide, histidine, and tryptophan biosynthesis. Active in heteromultimeric complexes with other 5-phosphoribose 1-diphosphate synthases (PRS2, PRS3, PRS4 and PRS5). This Saccharomyces cerevisiae (strain ATCC 204508 / S288c) (Baker's yeast) protein is Ribose-phosphate pyrophosphokinase 2 (PRS2).